Consider the following 522-residue polypeptide: MENIEKLLMQEKILMLELDLVRAKISLARANGSSQQGDLSLHRETPVKEEAVHSALATFTPTQVKAIPEQTAPGKESTNPLMASILPKDMNSVQTENRLVKPLDFLRPHQGIPIPQKSEPNSSVTLHRVESGIQHPHTNYYVVYNGPHAGIYDDWGCTKAATNGVPGVAHKKFATITEARAAADAYTTNQQTGRLNFIPKGEAQLKPKSFAKALISPPKQKAHWLTLGTKKPSSDPAPKEISFDPEITMDDFLYLYDLARKFDGEDDGTIFTTDNEKISLFNFRKNANPQMVREAYTAGLIKTIYPSNNLQEIKYLPKKVKDAVKRFRTNCIKNTEKDIFLKIRSTIPVWTIQGLLHKPRQVIEIGVSKKIVPTESKAMESKIQIEDLTELAVKSGEQFIQSLLRLNDKKKIFVNMVEHDTLVYSKNIKDTVSEDQRAIETFQQRVISGNLLGFHCPAICHFIMKTVEKEGGAYKCHHCEKGKAIVKDASTDRGTTDKDGPPPTRSIVEKEDVPTTSSKQVD.

Residues 487-500 (KDASTDRGTTDKDG) are compositionally biased toward basic and acidic residues. The tract at residues 487–522 (KDASTDRGTTDKDGPPPTRSIVEKEDVPTTSSKQVD) is disordered.

This sequence belongs to the caulimoviridae viroplasmin family.

It localises to the host cytoplasm. Its function is as follows. Enhances the ribosomal termination-reinitiation event leading to the translation of major open reading frames on the polycistronic viral RNAs. The protein is Transactivator/viroplasmin protein of Arabidopsis thaliana (Mouse-ear cress).